Reading from the N-terminus, the 289-residue chain is Alpha-soluble NSF attachment protein (289 aa).

Residues 112-145 (GKYYKEIAELYELEQNFEQAIIYFEKAADIYQSE) form a TPR repeat.

It belongs to the SNAP family.

Its subcellular location is the membrane. Its function is as follows. Required for vesicular transport between the endoplasmic reticulum and the Golgi apparatus. This chain is Alpha-soluble NSF attachment protein, found in Vitis vinifera (Grape).